The primary structure comprises 205 residues: Proteasome subunit beta type-3 (205 aa).

It belongs to the peptidase T1B family. In terms of assembly, the 26S proteasome consists of a 20S proteasome core and two 19S regulatory subunits. The 20S proteasome core is composed of 28 subunits that are arranged in four stacked rings, resulting in a barrel-shaped structure. The two end rings are each formed by seven alpha subunits, and the two central rings are each formed by seven beta subunits. The catalytic chamber with the active sites is on the inside of the barrel.

The protein localises to the cytoplasm. It is found in the nucleus. Functionally, non-catalytic component of the proteasome, a multicatalytic proteinase complex which is characterized by its ability to cleave peptides with Arg, Phe, Tyr, Leu, and Glu adjacent to the leaving group at neutral or slightly basic pH. The proteasome has an ATP-dependent proteolytic activity. The polypeptide is Proteasome subunit beta type-3 (PSB3) (Trypanosoma brucei brucei).